A 240-amino-acid chain; its full sequence is Ribonuclease PH (240 aa).

Phosphate-binding positions include R87 and 125-127; that span reads GTR.

The protein belongs to the RNase PH family. In terms of assembly, homohexameric ring arranged as a trimer of dimers.

The catalysed reaction is tRNA(n+1) + phosphate = tRNA(n) + a ribonucleoside 5'-diphosphate. Phosphorolytic 3'-5' exoribonuclease that plays an important role in tRNA 3'-end maturation. Removes nucleotide residues following the 3'-CCA terminus of tRNAs; can also add nucleotides to the ends of RNA molecules by using nucleoside diphosphates as substrates, but this may not be physiologically important. Probably plays a role in initiation of 16S rRNA degradation (leading to ribosome degradation) during starvation. The protein is Ribonuclease PH of Pseudomonas syringae pv. syringae (strain B728a).